We begin with the raw amino-acid sequence, 22 residues long: Antimicrobial peptide 4 (22 aa).

In terms of tissue distribution, expressed by the skin glands.

The protein localises to the secreted. Has very strong antimicrobial activity against Gram-positive bacterium S.aureus and yeast C.albicans, and very weak activity against Gram-negative bacterium E.coli. Has strong hemolytic activity against human red blood cells. The polypeptide is Antimicrobial peptide 4 (Xenopus tropicalis (Western clawed frog)).